The following is a 1045-amino-acid chain: Desmoglein-1 (1045 aa).

Positions 1–23 (MNWPFFRTAAVLFIFLVVLEVNS) are cleaved as a signal peptide. The propeptide occupies 24–49 (EFRIQVRDYNTKNGTIKWHSIRRQKR). N-linked (GlcNAc...) asparagine glycans are attached at residues Asn36, Asn110, and Asn180. Cadherin domains follow at residues 50-158 (EWIK…PVFS), 159-270 (MSTF…PYME), 271-385 (LPSN…GSVF), and 386-496 (RPGS…TDGA). Residues 50 to 546 (EWIKFAAACR…HPLDNVHFGP (497 aa)) lie on the Extracellular side of the membrane. A helical membrane pass occupies residues 547 to 567 (AGIGLLIMGFLVLGLVPFLLM). Topologically, residues 568–1045 (YCDCGGAPGG…TKYSTVQYTK (478 aa)) are cytoplasmic. Desmoglein repeat repeat units follow at residues 814-840 (TYPS…TMTE), 841-870 (SYTT…ERVV), 871-900 (GPIS…ERVI), 901-928 (APNS…ERVI), and 929-957 (RPTS…ERVV). The segment at 1019-1045 (FSNTLGSASPTTTRSRITKYSTVQYTK) is disordered. Positions 1020–1045 (SNTLGSASPTTTRSRITKYSTVQYTK) are enriched in polar residues.

As to quaternary structure, binds to JUP/plakoglobin. Interacts with PKP2. Interacts with DSC3; there is evidence to suggest that the interaction promotes cell-cell adhesion of keratinocytes.

It is found in the cell membrane. Its subcellular location is the cell junction. The protein localises to the desmosome. The protein resides in the cytoplasm. It localises to the nucleus. Its function is as follows. Component of intercellular desmosome junctions. Involved in the interaction of plaque proteins and intermediate filaments mediating cell-cell adhesion. The polypeptide is Desmoglein-1 (DSG1) (Sus scrofa (Pig)).